Consider the following 1015-residue polypeptide: Cytosolic carboxypeptidase 1 (1015 aa).

The interval 384-462 is disordered; it reads LPTATPSTPG…GALPKTTRLN (79 aa). A compositionally biased stretch (acidic residues) spans 416–451; sequence EDGMDEEDEAFVRDDDDEGKDDRGSDDDDGKDDDEI. Residues 727–1013 enclose the Peptidase M14 domain; the sequence is YPYTYSFLNS…DLLHSFLEMT (287 aa). Positions 792, 795, and 891 each coordinate Zn(2+). The Proton donor/acceptor role is filled by glutamate 977.

This sequence belongs to the peptidase M14 family. Requires Zn(2+) as cofactor. In terms of tissue distribution, in hermaphrodites and males, expressed in amphid and IL2 ciliated sensory neurons. In males, expressed in CEM head neurons, RnB and HOB tail neurons, and in gubernacular erector and retractor muscles.

It is found in the perikaryon. Its subcellular location is the cell projection. The protein localises to the cilium. The protein resides in the dendrite. Functionally, catalyzes the deglutamylation of polyglutamate side chains generated by post-translational polyglutamylation of proteins such as tubulins. Via the deglutamylation of tubulin, regulates the localization and velocity of kinesin motors and the structural integrity of microtubules in sensory cilia. In male CEM sensory neurons, regulates the cilia release of bioactive extracellular vesicles. Also regulates microtubule dynamics in uterine muscle cells. In Caenorhabditis elegans, this protein is Cytosolic carboxypeptidase 1.